The primary structure comprises 203 residues: Ribosomal RNA small subunit methyltransferase G (203 aa).

S-adenosyl-L-methionine contacts are provided by residues Gly-73, Leu-78, 124–125 (VE), and Arg-138.

The protein belongs to the methyltransferase superfamily. RNA methyltransferase RsmG family.

It localises to the cytoplasm. It catalyses the reaction guanosine(527) in 16S rRNA + S-adenosyl-L-methionine = N(7)-methylguanosine(527) in 16S rRNA + S-adenosyl-L-homocysteine. Functionally, specifically methylates the N7 position of guanine in position 527 of 16S rRNA. This is Ribosomal RNA small subunit methyltransferase G from Haemophilus ducreyi (strain 35000HP / ATCC 700724).